The sequence spans 101 residues: Large ribosomal subunit protein uL23 (101 aa).

This sequence belongs to the universal ribosomal protein uL23 family. In terms of assembly, part of the 50S ribosomal subunit. Contacts protein L29, and trigger factor when it is bound to the ribosome.

Functionally, one of the early assembly proteins it binds 23S rRNA. One of the proteins that surrounds the polypeptide exit tunnel on the outside of the ribosome. Forms the main docking site for trigger factor binding to the ribosome. The protein is Large ribosomal subunit protein uL23 of Leptospira biflexa serovar Patoc (strain Patoc 1 / Ames).